The primary structure comprises 318 residues: Aspartate carbamoyltransferase catalytic subunit (318 aa).

Arg-64 and Thr-65 together coordinate carbamoyl phosphate. L-aspartate is bound at residue Lys-92. The carbamoyl phosphate site is built by Arg-114, His-142, and Gln-145. L-aspartate is bound by residues Arg-176 and Arg-230. Residues Gly-271 and Pro-272 each coordinate carbamoyl phosphate.

Belongs to the aspartate/ornithine carbamoyltransferase superfamily. ATCase family. Heterododecamer (2C3:3R2) of six catalytic PyrB chains organized as two trimers (C3), and six regulatory PyrI chains organized as three dimers (R2).

The catalysed reaction is carbamoyl phosphate + L-aspartate = N-carbamoyl-L-aspartate + phosphate + H(+). It functions in the pathway pyrimidine metabolism; UMP biosynthesis via de novo pathway; (S)-dihydroorotate from bicarbonate: step 2/3. Catalyzes the condensation of carbamoyl phosphate and aspartate to form carbamoyl aspartate and inorganic phosphate, the committed step in the de novo pyrimidine nucleotide biosynthesis pathway. This Desulfovibrio desulfuricans (strain ATCC 27774 / DSM 6949 / MB) protein is Aspartate carbamoyltransferase catalytic subunit.